A 132-amino-acid polypeptide reads, in one-letter code: Flagellar assembly factor FliW (132 aa).

It belongs to the FliW family. Interacts with translational regulator CsrA and flagellin(s).

The protein resides in the cytoplasm. Functionally, acts as an anti-CsrA protein, binds CsrA and prevents it from repressing translation of its target genes, one of which is flagellin. Binds to flagellin and participates in the assembly of the flagellum. This is Flagellar assembly factor FliW from Borreliella afzelii (strain PKo) (Borrelia afzelii).